Consider the following 734-residue polypeptide: Cytosolic endo-beta-N-acetylglucosaminidase (734 aa).

Residue M1 is modified to N-acetylmethionine. The interval 1-45 (METSSVLTRGAARQRSPAAPEKQARDQTERRPGRRRQGRRINEDQ) is disordered. The span at 22 to 31 (KQARDQTERR) shows a compositional bias: basic and acidic residues. A BRCT domain is found at 281–375 (QNRVFFDSCD…DFFQNQDKFW (95 aa)).

The protein belongs to the glycosyl hydrolase 85 family.

The protein localises to the cytoplasm. Its subcellular location is the cytosol. The catalysed reaction is an N(4)-(oligosaccharide-(1-&gt;3)-[oligosaccharide-(1-&gt;6)]-beta-D-Man-(1-&gt;4)-beta-D-GlcNAc-(1-&gt;4)-alpha-D-GlcNAc)-L-asparaginyl-[protein] + H2O = an oligosaccharide-(1-&gt;3)-[oligosaccharide-(1-&gt;6)]-beta-D-Man-(1-&gt;4)-D-GlcNAc + N(4)-(N-acetyl-beta-D-glucosaminyl)-L-asparaginyl-[protein]. In terms of biological role, endoglycosidase that releases N-glycans from glycoproteins by cleaving the beta-1,4-glycosidic bond in the N,N'-diacetylchitobiose core. Involved in the processing of free oligosaccharides in the cytosol. This is Cytosolic endo-beta-N-acetylglucosaminidase (Engase) from Mus musculus (Mouse).